The sequence spans 142 residues: Large ribosomal subunit protein uL13 (142 aa).

The protein belongs to the universal ribosomal protein uL13 family. Part of the 50S ribosomal subunit.

This protein is one of the early assembly proteins of the 50S ribosomal subunit, although it is not seen to bind rRNA by itself. It is important during the early stages of 50S assembly. The polypeptide is Large ribosomal subunit protein uL13 (Pseudomonas putida (strain ATCC 700007 / DSM 6899 / JCM 31910 / BCRC 17059 / LMG 24140 / F1)).